Here is a 319-residue protein sequence, read N- to C-terminus: Beta-ketoacyl-[acyl-carrier-protein] synthase III (319 aa).

Residues Cys-110 and His-246 contribute to the active site. An ACP-binding region spans residues 247–251 (QANYR). Asn-276 is an active-site residue.

The protein belongs to the thiolase-like superfamily. FabH family. As to quaternary structure, homodimer.

The protein resides in the cytoplasm. It carries out the reaction malonyl-[ACP] + acetyl-CoA + H(+) = 3-oxobutanoyl-[ACP] + CO2 + CoA. The protein operates within lipid metabolism; fatty acid biosynthesis. Functionally, catalyzes the condensation reaction of fatty acid synthesis by the addition to an acyl acceptor of two carbons from malonyl-ACP. Catalyzes the first condensation reaction which initiates fatty acid synthesis and may therefore play a role in governing the total rate of fatty acid production. Possesses both acetoacetyl-ACP synthase and acetyl transacylase activities. Its substrate specificity determines the biosynthesis of branched-chain and/or straight-chain of fatty acids. The chain is Beta-ketoacyl-[acyl-carrier-protein] synthase III from Lactobacillus delbrueckii subsp. bulgaricus (strain ATCC BAA-365 / Lb-18).